We begin with the raw amino-acid sequence, 119 residues long: Large ribosomal subunit protein uL22c (119 aa).

It belongs to the universal ribosomal protein uL22 family. In terms of assembly, part of the 50S ribosomal subunit.

Its subcellular location is the plastid. The protein localises to the chloroplast. Functionally, this protein binds specifically to 23S rRNA. Its function is as follows. The globular domain of the protein is located near the polypeptide exit tunnel on the outside of the subunit, while an extended beta-hairpin is found that lines the wall of the exit tunnel in the center of the 70S ribosome. The chain is Large ribosomal subunit protein uL22c (rpl22) from Anthoceros angustus (Hornwort).